The following is a 288-amino-acid chain: Glycine--tRNA ligase alpha subunit (288 aa).

The protein belongs to the class-II aminoacyl-tRNA synthetase family. In terms of assembly, tetramer of two alpha and two beta subunits.

Its subcellular location is the cytoplasm. It catalyses the reaction tRNA(Gly) + glycine + ATP = glycyl-tRNA(Gly) + AMP + diphosphate. This is Glycine--tRNA ligase alpha subunit from Rickettsia africae (strain ESF-5).